The primary structure comprises 673 residues: MNGVEVPAKIQKRIERLREEINDHNYRYYVLSQPTIPDSVYDELFHELQKLEKKYPETITPSSPTQRVGAEPLKVFEPVHHEIPMLSLDNVFDEKGLRAFDKRIRQRLKLDKPFEYVCEPKMDGVALSLLYENGELIRAATRGDGYTGENVTQNTRTIASVPLQLRGNDYPELVEIRGEVLMPREGFAKFNREAEKRGDKTFANPRNAASGSLRQLDPRITAKRPLIFYGYLIGLLKGKDFPKNHCDVLKWFKDWGIPVISEIKVVGGIEGCLDYYEHLVKTREKMPFDIDGIVIKVNSLQVQAELGFVSRAPRWAIAYKFPAQEKMTVVKAIEFQVGRTGAVTPVARLEPVSVSGVTVSNATLHNFDELYRKDVRVGDTVIVRRAGDVIPEVVGPILAKRPKKAKLIKIPSRCPVCHAEVIKPEGEAVARCMGGLYCRAQLRESIKHFASRRALDIEGLGDKLVELFIQEKLIKDITGIYQLKKSAITALPRMGEKSAENLLTAIEKSKKTTLPRFLYALGIRGVGDTTARTLARHFHELDLLMKASIETLQEIRDIGPVVAENIHAFFHQKHNAELINKLIHLGVHWPQEKAVVKSEIAGKTFVLTGALKSLTREEAEEKIERSGGKATSSVSKNTDYVIVGENPGSKYEKAKALGISLIDEEAFLKLLKS.

Residues 38-42, 87-88, and Glu-119 each bind NAD(+); these read DSVYD and SL. The N6-AMP-lysine intermediate role is filled by Lys-121. The NAD(+) site is built by Arg-142, Glu-179, Lys-296, and Lys-320. Residues Cys-414, Cys-417, Cys-432, and Cys-438 each contribute to the Zn(2+) site. One can recognise a BRCT domain in the interval 595 to 673; that stretch reads VVKSEIAGKT…EEAFLKLLKS (79 aa).

Belongs to the NAD-dependent DNA ligase family. LigA subfamily. Mg(2+) serves as cofactor. Mn(2+) is required as a cofactor.

The catalysed reaction is NAD(+) + (deoxyribonucleotide)n-3'-hydroxyl + 5'-phospho-(deoxyribonucleotide)m = (deoxyribonucleotide)n+m + AMP + beta-nicotinamide D-nucleotide.. Functionally, DNA ligase that catalyzes the formation of phosphodiester linkages between 5'-phosphoryl and 3'-hydroxyl groups in double-stranded DNA using NAD as a coenzyme and as the energy source for the reaction. It is essential for DNA replication and repair of damaged DNA. The protein is DNA ligase of Coxiella burnetii (strain CbuK_Q154) (Coxiella burnetii (strain Q154)).